The primary structure comprises 426 residues: Elongation factor Tu, mitochondrial (426 aa).

The transit peptide at 1–27 (MFKNLAGSFRAVSRVAFKTRPSLVRSY) directs the protein to the mitochondrion. The 197-residue stretch at 34-230 (KPHVNIGTIG…AVDEHIPTPT (197 aa)) folds into the tr-type G domain. The G1 stretch occupies residues 43-50 (GHVDHGKT). 43–50 (GHVDHGKT) contacts GTP. The interval 84-88 (GITIS) is G2. Positions 105-108 (DCPG) are G3. GTP-binding positions include 105 to 109 (DCPGH) and 160 to 163 (NKVD). A G4 region spans residues 160–163 (NKVD). The G5 stretch occupies residues 198 to 200 (SAL).

It belongs to the TRAFAC class translation factor GTPase superfamily. Classic translation factor GTPase family. EF-Tu/EF-1A subfamily.

The protein resides in the mitochondrion. Its pathway is protein biosynthesis; polypeptide chain elongation. Its function is as follows. G-protein that, in its active GTP-bound form, binds to and delivers aminoacyl-tRNA to the A-site of ribosomes during protein biosynthesis. In the presence of a correct codon-anticodon match between the aminoacyl-tRNA and the A-site codon of the ribosome-bound mRNA, the ribosome acts as a GTPase activator and the GTP is hydrolyzed. The inactive GDP-bound form leaves the ribosome and must be recycled before binding another molecule of aminoacyl-tRNA. Required for mitochondrial protein biosynthesis and maintenance of mitochondrial DNA. The chain is Elongation factor Tu, mitochondrial (TUF1) from Meyerozyma guilliermondii (strain ATCC 6260 / CBS 566 / DSM 6381 / JCM 1539 / NBRC 10279 / NRRL Y-324) (Yeast).